Here is a 143-residue protein sequence, read N- to C-terminus: Hemoglobin anodic subunit alpha (143 aa).

Ser2 carries the N-acetylserine modification. Residues 2 to 143 enclose the Globin domain; the sequence is SLSAKDMAVV…FTLALSERYR (142 aa). His60 contacts O2. His89 contributes to the heme b binding site.

The protein belongs to the globin family. In terms of assembly, heterotetramer of two alpha chains and two beta chains. Red blood cells.

Involved in oxygen transport from gills to the various peripheral tissues. The polypeptide is Hemoglobin anodic subunit alpha (hba) (Anguilla anguilla (European freshwater eel)).